A 1104-amino-acid polypeptide reads, in one-letter code: Transient receptor potential cation channel subfamily M member 8 (1104 aa).

Topologically, residues Met1–Ser733 are cytoplasmic. A helical membrane pass occupies residues Pro734–Met758. At Asp759–His765 the chain is on the extracellular side. A helical membrane pass occupies residues Thr766–Asn789. Residues Glu782 and Gln785 each contribute to the Ca(2+) site. Over Gly790–Asp796 the chain is Cytoplasmic. A helical membrane pass occupies residues Leu797–Leu817. 2 residues coordinate Ca(2+): Asn799 and Asp802. The Extracellular portion of the chain corresponds to His818 to Lys822. A helical transmembrane segment spans residues Ser823–Thr848. Topologically, residues Val849–Leu853 are cytoplasmic. The helical transmembrane segment at Gly854–Arg890 threads the bilayer. At Gln891 to Arg895 the chain is on the extracellular side. The segment at residues Trp896–Phe912 is an intramembrane region (pore-forming). Residues Gly913–Glu953 are Extracellular-facing. The chain crosses the membrane as a helical span at residues Trp954–Gly984. The Cytoplasmic segment spans residues Ile985–Lys1104. Residues Ile1067 to Lys1104 are a coiled coil.

Belongs to the transient receptor (TC 1.A.4) family. LTrpC subfamily. TRPM8 sub-subfamily. In terms of assembly, homotetramer. Interacts (via N-terminus and C-terminus domains) with TCAF1; the interaction stimulates TRPM8 channel activity. Interacts (via N-terminus and C-terminus domains) with TCAF2; the interaction inhibits TRPM8 channel activity. As to expression, expressed in dorsal root and trigeminal ganglia. Specifically expressed in a subset of sensory neurons, including cold-sensitive neurons in trigeminal neurons.

It localises to the cell membrane. It is found in the membrane raft. The enzyme catalyses Ca(2+)(in) = Ca(2+)(out). It catalyses the reaction Na(+)(in) = Na(+)(out). The catalysed reaction is K(+)(in) = K(+)(out). Its activity is regulated as follows. Activated by cold temperatures and by both natural and synthetic cooling compounds such as menthol and icilin. Activation of the channel requires the presence of PI(4,5)P2; PI(4,5)P2 is necessary to gate the channel. Activated by intracellular Ca(2+). Its function is as follows. Non-selective ion channel permeable to monovalent and divalent cations, including Na(+), K(+), and Ca(2+), with higher permeability for Ca(2+). Activated by multiple factors, such as temperature, voltage, pressure, and changes in osmolality. Activated by cool temperatures (&lt;23-28 degrees Celsius) and by chemical ligands evoking a sensation of coolness, such as menthol and icilin, therefore plays a central role in the detection of environmental cold temperatures. TRPM8 is a voltage-dependent channel; its activation by cold or chemical ligands shifts its voltage thresholds towards physiological membrane potentials, leading to the opening of the channel. In addition to its critical role in temperature sensing, regulates basal tear secretion by sensing evaporation-induced cooling and changes in osmolality. This chain is Transient receptor potential cation channel subfamily M member 8 (Trpm8), found in Rattus norvegicus (Rat).